Consider the following 55-residue polypeptide: Large ribosomal subunit protein bL32c (55 aa).

It belongs to the bacterial ribosomal protein bL32 family.

The protein localises to the plastid. It is found in the chloroplast. The polypeptide is Large ribosomal subunit protein bL32c (Atropa belladonna (Belladonna)).